Reading from the N-terminus, the 562-residue chain is MSDQVVHSFRWTQSLRRGLSNWTCPVKADVLNDTRALLSGLDFAKVASVQRMMRRDKRDESDLTSLRDLNKEVDSLMTMKSTQKNMFLKVGSLSKGELMELSGDLNKLKDKVQRTERPPGSGGQYQGNLTTTQLTRRGELLQFIGIQKAGRVGMNGVVKVWDVKDSSLMINQFGSMPALTISCMAEQGGETLNDVVQGLTDLGLLYTAKYPNLNDLEALSEKHPCLKVITQEESQINISGYNLSLSAAVKAGACLIDGGNMLETIKIDTSTFTTVIKTLLEVKARERMFVSSVPGQRNPYENILYKLCLSGEGWPYIASRSQIKGRAWDNTVVEFDSAPPRAPVPVRNGGAPLLGPLRPELEDQVRKGVEGLSPNLTTWIDIEGPPNDPVELAIYQPETQKYLHCYRRPNDIKSFKDQSKYCHGILLKDVENARPGLISTIIRYLPKSMVFTAQGEDDIKRLFDMHGRQDLKIVDVKLSAEQSRVFEELVWKKFEHLCDRHKGIVIKSKKKGSKPASTNAHCALMDCIMFNAVLVGFVADEKPKRLLPIDILFREPDTTVVL.

A binding site for the cap structure m7GTP region spans residues 53 to 238; that stretch reads MRRDKRDESD…ITQEESQINI (186 aa). Mn(2+)-binding residues include aspartate 381 and glutamate 383. 4 residues coordinate Zn(2+): glutamate 391, cysteine 498, histidine 501, and cysteine 522. Aspartate 526 contributes to the Mn(2+) binding site.

This sequence belongs to the arenaviridae nucleocapsid protein family. As to quaternary structure, homomultimerizes to form the nucleocapsid. Binds to viral genomic RNA. Interacts with glycoprotein G2. Interacts with protein Z; this interaction probably directs the encapsidated genome to budding sites. Interacts with protein L; this interaction does not interfere with Z-L interaction. Interacts with host IKBKE (via Protein kinase domain); the interaction inhibits IKBKE kinase activity.

Its subcellular location is the virion. It is found in the host cytoplasm. Functionally, encapsidates the genome, protecting it from nucleases. The encapsidated genomic RNA is termed the nucleocapsid (NC). Serves as template for viral transcription and replication. The increased presence of protein N in host cell does not seem to trigger the switch from transcription to replication as observed in other negative strain RNA viruses. Through the interaction with host IKBKE, strongly inhibits the phosphorylation and nuclear translocation of host IRF3, a protein involved in interferon activation pathway, leading to the inhibition of interferon-beta and IRF3-dependent promoters activation. Also encodes a functional 3'-5' exoribonuclease that degrades preferentially dsRNA substrates and thereby participates in the suppression of interferon induction. This Bear Canyon mammarenavirus (isolate Mouse/United States/AV A0070039/2000) (BCNV) protein is Nucleoprotein.